Reading from the N-terminus, the 534-residue chain is Peptide chain release factor 3 (534 aa).

In terms of domain architecture, tr-type G spans 9–278 (ARRRTFAIIS…FFVEHAPSPQ (270 aa)). GTP is bound by residues 18 to 25 (SHPDAGKT), 86 to 90 (DTPGH), and 140 to 143 (NKLD).

The protein belongs to the TRAFAC class translation factor GTPase superfamily. Classic translation factor GTPase family. PrfC subfamily.

It is found in the cytoplasm. Increases the formation of ribosomal termination complexes and stimulates activities of RF-1 and RF-2. It binds guanine nucleotides and has strong preference for UGA stop codons. It may interact directly with the ribosome. The stimulation of RF-1 and RF-2 is significantly reduced by GTP and GDP, but not by GMP. The sequence is that of Peptide chain release factor 3 from Xylella fastidiosa (strain M12).